The following is an 87-amino-acid chain: Potassium channel toxin TsTXK-beta/Cryptide TyPep-16 (87 aa).

The N-terminal stretch at 1–19 is a signal peptide; it reads MERKLALLLILGMVTLASC. The region spanning 53–87 is the BetaSPN-type CS-alpha/beta domain; it reads QFGCPAYEGYCNDHCNDIERKDGECHGFKCKCAKD. 3 disulfide bridges follow: cysteine 56-cysteine 77, cysteine 63-cysteine 82, and cysteine 67-cysteine 84.

This sequence belongs to the long chain scorpion toxin family. Class 1 subfamily. In terms of tissue distribution, expressed by the venom gland.

Its subcellular location is the secreted. Functionally, specifically blocks voltage-gated potassium channels Kv4.2/KCND2. When measured at the peak current, the blocking effect of this toxin is about 65% and shows an IC(50)=652 nM. However, when measured at a later moment of the depolarising test pulse (500 ms), a 100% block of the current is observed with an IC(50)=313 nM. This may indicate a preference of the toxin for binding the inactivated state of the channel. The inhibition is completely reversible. In vivo, intraplantar injection into rat paw induces overt nociception (licking and lifting behaviors) and decreases the mechanical nociceptive threshold (hyperalgesia). Furthermore, the hyperalgesia is prolonged when intrathecal injections are performed. Induces discomfort and anxiety in mice, as it moderately diminishes locomotion (but has no effect on rearing behavior). Does not cause hemolysis, mast cell degranulation, LDH release, and does not have antimicrobial activity. Does not cause edema and pain. In terms of biological role, does not induce hemolytic activity, lactate dehydrogenase (LDH) release from mast cells, mast cell degranulation, and antimicrobial effects. In vivo, injection into mice causes moderate edema formation, but induces very weak or no change in nociceptive sensibility. It also reduces mice locomotion, suggesting an increase in anxiety, but causes no alteration in rearing (standing on hind limbs). This Tityus serrulatus (Brazilian scorpion) protein is Potassium channel toxin TsTXK-beta/Cryptide TyPep-16.